We begin with the raw amino-acid sequence, 188 residues long: Ribosome maturation factor RimM (188 aa).

In terms of domain architecture, PRC barrel spans Glu-98–Leu-174. Residues Asp-169–Ser-188 are disordered. Over residues Pro-179 to Ser-188 the composition is skewed to acidic residues.

Belongs to the RimM family. Binds ribosomal protein uS19.

The protein localises to the cytoplasm. In terms of biological role, an accessory protein needed during the final step in the assembly of 30S ribosomal subunit, possibly for assembly of the head region. Essential for efficient processing of 16S rRNA. May be needed both before and after RbfA during the maturation of 16S rRNA. It has affinity for free ribosomal 30S subunits but not for 70S ribosomes. The chain is Ribosome maturation factor RimM from Deinococcus radiodurans (strain ATCC 13939 / DSM 20539 / JCM 16871 / CCUG 27074 / LMG 4051 / NBRC 15346 / NCIMB 9279 / VKM B-1422 / R1).